Reading from the N-terminus, the 558-residue chain is MALNKSMHARNRYKDKPPDFAYLAGKYPEFRQHVQTTLAGRVSLNFKDPEAVRALTCTLLKEDFGLTIDIPLERLIPTVPLRLNYIHWVEDLIGHQDADKRVLRRGIDIGTGASCIYPLLGSTLNGWYFLATEVDDMCFNYAKKNVEQNNLSDLIKVVKVPQKTLLMDALKEESEIIYDFCMCNPPFFANQLEAKGVNSRNPRRPPPSSVNTGGITEIMAEGGELEFVKRIIHDSLQLKKRLRWYSCMLGKKCSLAPLKEELKIQGVPKVTHTEFCQGRTMRWALAWSFYDDVQVPSPPSKRRKLEKPRKPITFTVLASTVKELSIKAAAMGWDAVEGIAVVRAWIEKILADLKVQHKRVPCGKDEVSLFVTAIENSWVHLRRKKRERVRQLRELPRASDDVLQAMEEEKNSQNSVSNSVDCEKSKTEDSETELVAPDEDVHLTADDELREESATKELSEHMEEEETEAKQTEASFNEGSSSAEQGAQPSEEAGNLTAEKGQSPKETSRCFLFKCLMNVKKEGNDVLVEMHWVEGQNRDLMNQLCTYLRNQVLRLVAS.

The RNA-binding stretch occupies residues 17–20 (PPDF). Positions 82, 110, 114, 133, 164, and 184 each coordinate S-adenosyl-L-methionine. The K-loop stretch occupies residues 163–167 (KTLLM). RNA-binding stretches follow at residues 199–211 (SRNP…SSVN), 250–254 (GKKCS), and 277–283 (QGRTMRW). Positions 289 to 400 (FYDDVQVPSP…QLRELPRASD (112 aa)) are VCR 1. The segment at 407-502 (EEEKNSQNSV…AGNLTAEKGQ (96 aa)) is disordered. A compositionally biased stretch (basic and acidic residues) spans 439–461 (EDVHLTADDELREESATKELSEH). A compositionally biased stretch (polar residues) spans 477–488 (NEGSSSAEQGAQ). The segment at 511 to 558 (FLFKCLMNVKKEGNDVLVEMHWVEGQNRDLMNQLCTYLRNQVLRLVAS) is VCR 2.

Belongs to the methyltransferase superfamily. METTL16/RlmF family.

The protein localises to the nucleus. It localises to the cytoplasm. The catalysed reaction is adenosine in U6 snRNA + S-adenosyl-L-methionine = N(6)-methyladenosine in U6 snRNA + S-adenosyl-L-homocysteine + H(+). The enzyme catalyses an adenosine in mRNA + S-adenosyl-L-methionine = an N(6)-methyladenosine in mRNA + S-adenosyl-L-homocysteine + H(+). Methyltransferase activity is autoinhibited by the K-loop region that blocks S-adenosyl-L-methionine-binding. Upon activation, K-loop changes conformation, allowing S-adenosyl-L-methionine-binding and subsequent methyltransferase activity. mRNA N6-adenosine-methyltransferase activity is inhibited by zinc. Functionally, RNA N6-methyltransferase that methylates adenosine residues at the N(6) position of a subset of RNAs and is involved in S-adenosyl-L-methionine homeostasis by regulating expression of MAT2A transcripts. Able to N6-methylate a subset of mRNAs and U6 small nuclear RNAs (U6 snRNAs). In contrast to the METTL3-METTL14 heterodimer, only able to methylate a limited number of RNAs: requires both a 5'UACAGAGAA-3' nonamer sequence and a specific RNA structure. Plays a key role in S-adenosyl-L-methionine homeostasis by mediating N6-methylation of MAT2A mRNAs, altering splicing of MAT2A transcripts: in presence of S-adenosyl-L-methionine, binds the 3'-UTR region of MAT2A mRNA and specifically N6-methylates the first hairpin of MAT2A mRNA, impairing MAT2A splicing and protein expression. In S-adenosyl-L-methionine-limiting conditions, binds the 3'-UTR region of MAT2A mRNA but stalls due to the lack of a methyl donor, preventing N6-methylation and promoting expression of MAT2A. In addition to mRNAs, also able to mediate N6-methylation of U6 small nuclear RNA (U6 snRNA): specifically N6-methylates adenine in position 43 of U6 snRNAs. The chain is RNA N(6)-adenosine-methyltransferase METTL16 (METTL16) from Gallus gallus (Chicken).